We begin with the raw amino-acid sequence, 365 residues long: Dihydroorotate dehydrogenase (quinone) (365 aa).

FMN is bound by residues 61 to 65 and S85; that span reads AGFDK. K65 serves as a coordination point for substrate. 110–114 lines the substrate pocket; sequence NRMGF. 2 residues coordinate FMN: N139 and N170. N170 serves as a coordination point for substrate. S173 (nucleophile) is an active-site residue. Substrate is bound at residue N175. 2 residues coordinate FMN: K214 and S242. Substrate is bound at residue 243–244; that stretch reads NT. FMN is bound by residues G266, G295, and 316-317; that span reads YS.

The protein belongs to the dihydroorotate dehydrogenase family. Type 2 subfamily. In terms of assembly, monomer. It depends on FMN as a cofactor.

Its subcellular location is the cell membrane. It carries out the reaction (S)-dihydroorotate + a quinone = orotate + a quinol. Its pathway is pyrimidine metabolism; UMP biosynthesis via de novo pathway; orotate from (S)-dihydroorotate (quinone route): step 1/1. Catalyzes the conversion of dihydroorotate to orotate with quinone as electron acceptor. The polypeptide is Dihydroorotate dehydrogenase (quinone) (Bradyrhizobium diazoefficiens (strain JCM 10833 / BCRC 13528 / IAM 13628 / NBRC 14792 / USDA 110)).